Here is a 102-residue protein sequence, read N- to C-terminus: Small ribosomal subunit protein uS10 (102 aa).

Belongs to the universal ribosomal protein uS10 family. Part of the 30S ribosomal subunit.

Involved in the binding of tRNA to the ribosomes. The protein is Small ribosomal subunit protein uS10 of Nitrosospira multiformis (strain ATCC 25196 / NCIMB 11849 / C 71).